The sequence spans 246 residues: Pyridoxine 5'-phosphate synthase (246 aa).

Asn12 provides a ligand contact to 3-amino-2-oxopropyl phosphate. 14–15 serves as a coordination point for 1-deoxy-D-xylulose 5-phosphate; the sequence is DH. Arg23 is a 3-amino-2-oxopropyl phosphate binding site. His48 serves as the catalytic Proton acceptor. Positions 50 and 55 each coordinate 1-deoxy-D-xylulose 5-phosphate. The Proton acceptor role is filled by Glu75. Residue Thr105 coordinates 1-deoxy-D-xylulose 5-phosphate. His196 acts as the Proton donor in catalysis. 3-amino-2-oxopropyl phosphate is bound by residues Gly197 and 218–219; that span reads GH.

The protein belongs to the PNP synthase family. As to quaternary structure, homooctamer; tetramer of dimers.

Its subcellular location is the cytoplasm. It catalyses the reaction 3-amino-2-oxopropyl phosphate + 1-deoxy-D-xylulose 5-phosphate = pyridoxine 5'-phosphate + phosphate + 2 H2O + H(+). It functions in the pathway cofactor biosynthesis; pyridoxine 5'-phosphate biosynthesis; pyridoxine 5'-phosphate from D-erythrose 4-phosphate: step 5/5. Functionally, catalyzes the complicated ring closure reaction between the two acyclic compounds 1-deoxy-D-xylulose-5-phosphate (DXP) and 3-amino-2-oxopropyl phosphate (1-amino-acetone-3-phosphate or AAP) to form pyridoxine 5'-phosphate (PNP) and inorganic phosphate. The polypeptide is Pyridoxine 5'-phosphate synthase (Pseudomonas putida (strain ATCC 47054 / DSM 6125 / CFBP 8728 / NCIMB 11950 / KT2440)).